A 456-amino-acid polypeptide reads, in one-letter code: Taurine--pyruvate aminotransferase (456 aa).

At lysine 280 the chain carries N6-(pyridoxal phosphate)lysine.

This sequence belongs to the class-III pyridoxal-phosphate-dependent aminotransferase family. As to quaternary structure, homotetramer. Pyridoxal 5'-phosphate is required as a cofactor.

It catalyses the reaction taurine + pyruvate = sulfoacetaldehyde + L-alanine. Its pathway is organosulfur degradation; alkanesulfonate degradation. Its function is as follows. Involved in an anaerobic respiration pathway that converts the sulfonate taurine (2-aminoethanesulfonate) to ammonia, acetate and sulfide. Catalyzes the initial metabolic reaction of anaerobic taurine degradation, i.e. the transamination reaction between taurine and pyruvate leading to sulfoacetaldehyde and alanine. This is Taurine--pyruvate aminotransferase from Bilophila wadsworthia (strain 3_1_6).